The sequence spans 116 residues: MTIRTEKVASLLQKELSAIFEKELPRSGPLMTVVQVKVTTDLGIARVYVSIIGSEKERKTAIAHLQNETRYIRKLLSAKIRHQFRRIPELEFYEDRLYEKAERIDLLIKQALGTSK.

The protein belongs to the RbfA family. As to quaternary structure, monomer. Binds 30S ribosomal subunits, but not 50S ribosomal subunits or 70S ribosomes.

It is found in the cytoplasm. In terms of biological role, one of several proteins that assist in the late maturation steps of the functional core of the 30S ribosomal subunit. Associates with free 30S ribosomal subunits (but not with 30S subunits that are part of 70S ribosomes or polysomes). Required for efficient processing of 16S rRNA. May interact with the 5'-terminal helix region of 16S rRNA. The polypeptide is Ribosome-binding factor A (Chlorobium phaeobacteroides (strain BS1)).